The sequence spans 121 residues: Small ribosomal subunit protein uS13 (121 aa).

Residues 93–121 (RGLPVRGQNTKNNARTRKGPRRTVANKKK) form a disordered region. Basic residues predominate over residues 106–121 (ARTRKGPRRTVANKKK).

The protein belongs to the universal ribosomal protein uS13 family. Part of the 30S ribosomal subunit. Forms a loose heterodimer with protein S19. Forms two bridges to the 50S subunit in the 70S ribosome.

In terms of biological role, located at the top of the head of the 30S subunit, it contacts several helices of the 16S rRNA. In the 70S ribosome it contacts the 23S rRNA (bridge B1a) and protein L5 of the 50S subunit (bridge B1b), connecting the 2 subunits; these bridges are implicated in subunit movement. Contacts the tRNAs in the A and P-sites. In Bacillus pumilus (strain SAFR-032), this protein is Small ribosomal subunit protein uS13.